Consider the following 107-residue polypeptide: ATPase inhibitor, mitochondrial (107 aa).

The N-terminal 25 residues, 1–25 (MAGSALAVRARLGVWGMRVLQTRGF), are a transit peptide targeting the mitochondrion. A disordered region spans residues 25 to 58 (FGSDSSESMDSGAGSIREAGGAFGKREKAEEDRY). The N-terminal inhibitory region stretch occupies residues 26-52 (GSDSSESMDSGAGSIREAGGAFGKREK). The residue at position 39 (serine 39) is a Phosphoserine. Positions 48–58 (GKREKAEEDRY) are enriched in basic and acidic residues. Residues 60 to 107 (REKTREQLAALKKHHEDEIDHHSKEIERLQKQIERHKKKIKYLKNSEH) are a coiled coil. An antiparallel alpha-helical coiled coil region region spans residues 74-106 (HEDEIDHHSKEIERLQKQIERHKKKIKYLKNSE). Lysine 103 carries the N6-succinyllysine modification.

It belongs to the ATPase inhibitor family. In terms of assembly, homodimer; represents the active form and is present at a pH value below 6.5. Homotetramer; represents the inactive form and is present at a pH value above 7.0.

It localises to the mitochondrion. Functionally, endogenous F(1)F(o)-ATPase inhibitor limiting ATP depletion when the mitochondrial membrane potential falls below a threshold and the F(1)F(o)-ATP synthase starts hydrolyzing ATP to pump protons out of the mitochondrial matrix. Required to avoid the consumption of cellular ATP when the F(1)F(o)-ATP synthase enzyme acts as an ATP hydrolase. Indirectly acts as a regulator of heme synthesis in erythroid tissues: regulates heme synthesis by modulating the mitochondrial pH and redox potential, allowing FECH to efficiently catalyze the incorporation of iron into protoporphyrin IX to produce heme. This is ATPase inhibitor, mitochondrial from Rattus norvegicus (Rat).